Reading from the N-terminus, the 241-residue chain is MORN repeat-containing protein 3 (241 aa).

Positions 6–35 (CPQKSEPLWKEWDQKAQKNGLRHQVFAVNG) are interaction with MDM2. 7 MORN repeats span residues 38-60 (YVGE…KNGA), 62-84 (YEGD…DQET), 91-113 (YSGW…PKEY), 114-136 (YEGD…NGDI), 137-159 (YEGQ…NGNR), 160-182 (YEGN…DHGQ), and 184-205 (FEGF…GRDE). The interval 76–100 (TLSLPDQETGKYKRAYSGWWKGDKK) is interaction with SIRT1. The tract at residues 206–240 (APQPTQFPIPEVKILDPDGVLEEALAMFKKTKEEG) is interaction with TP53.

In terms of assembly, interacts with MEIG1. Interacts with TP53, MDM2 and SIRT1; the interactions mediate post-transcriptional modifications of TP53 by MDM2 and SIRT1.

The protein resides in the cytoplasmic vesicle. It is found in the secretory vesicle. The protein localises to the acrosome. In terms of biological role, assembles a suppression complex (suppresome) by tethering SIRT1 and MDM2 to regulate composite modifications of p53/TP53. Confers both deacetylation-mediated functional inactivation, by SIRT1, and ubiquitination-dependent degradation, by MDM2, of p53/TP53, promoting a proliferative and cell survival behaviors. May play a role in the regulation of spermatogenesis. The polypeptide is MORN repeat-containing protein 3 (MORN3) (Bos taurus (Bovine)).